The primary structure comprises 841 residues: Tax1-binding protein 1 homolog (841 aa).

Coiled coils occupy residues 173-560 and 612-640; these read TTVL…EKAR and YSIETLRNEKAKMERFINDLEKKLEKQAG. The disordered stretch occupies residues 419 to 441; the sequence is MRDEQQQKSNPFAKKDQGADNNR. A compositionally biased stretch (basic and acidic residues) spans 431 to 441; sequence AKKDQGADNNR. A disordered region spans residues 678-759; that stretch reads YASQETRDGA…NVNFEQTPDP (82 aa). Residues 741-751 are compositionally biased toward acidic residues; the sequence is DEDDDDDDDNV. UBZ1-type zinc fingers lie at residues 779–805 and 806–832; these read NKKCPLCPVSFPPNYDQGQFEAHVESH and WKVCPMCNEQFPPDCDQQIFERHVQTH. 8 residues coordinate Zn(2+): Cys-782, Cys-785, His-801, His-805, Cys-809, Cys-812, His-828, and His-832.

Functionally, may have an anti-apoptotic activity. The sequence is that of Tax1-binding protein 1 homolog (tax1bp1) from Xenopus tropicalis (Western clawed frog).